The following is a 303-amino-acid chain: Quinolinate synthase (303 aa).

Histidine 23 and serine 40 together coordinate iminosuccinate. [4Fe-4S] cluster is bound at residue cysteine 85. Iminosuccinate contacts are provided by residues 111–113 and serine 128; that span reads YIN. Cysteine 171 provides a ligand contact to [4Fe-4S] cluster. Iminosuccinate-binding positions include 197-199 and threonine 214; that span reads HPE. Cysteine 259 contributes to the [4Fe-4S] cluster binding site.

The protein belongs to the quinolinate synthase family. Type 2 subfamily. Requires [4Fe-4S] cluster as cofactor.

It is found in the cytoplasm. It catalyses the reaction iminosuccinate + dihydroxyacetone phosphate = quinolinate + phosphate + 2 H2O + H(+). It participates in cofactor biosynthesis; NAD(+) biosynthesis; quinolinate from iminoaspartate: step 1/1. In terms of biological role, catalyzes the condensation of iminoaspartate with dihydroxyacetone phosphate to form quinolinate. In Clostridium acetobutylicum (strain ATCC 824 / DSM 792 / JCM 1419 / IAM 19013 / LMG 5710 / NBRC 13948 / NRRL B-527 / VKM B-1787 / 2291 / W), this protein is Quinolinate synthase.